Reading from the N-terminus, the 214-residue chain is DNA-binding protein HupB (214 aa).

K3 is subject to N6-acetyllysine. K3 is subject to N6-succinyllysine. T43 and T45 each carry phosphothreonine. 3 positions are modified to N6-acetyllysine: K72, K86, and K103. The disordered stretch occupies residues 100–214 (PAVKRGVGAS…KKATARRGRK (115 aa)). Low complexity predominate over residues 102-112 (VKRGVGASAAK). Position 113 is an N6-succinyllysine (K113). Residues 113–214 (KVAKKAPAKK…KKATARRGRK (102 aa)) show a composition bias toward basic residues. 2 positions are modified to N6-acetyllysine: K116 and K133. K142 is modified (N6-succinyllysine). N6-acetyllysine is present on residues K146 and K167.

This sequence belongs to the bacterial histone-like protein family. Long actinobacterial subfamily. Oligomerizes. Homodimer; the crystallized protein is missing the C-terminal 105 residues. Interacts with topoisomerase 1 (topA). Interacts with Eis. Interacts with NAD-dependent protein deacylase NPD (MRA_1161). Interacts with MRA_0812 CoA transferase. Post-translationally, phosphorylated in vivo on Ser and Thr-residues; the protein is degraded during purification so most sites were not identified, but at least one of Thr-43 and/or Thr-45 are modified in vivo. In vitro at least PknE, PknF and PknB phosphorylate HupB; PknE is the most active and phosphorylates many sites in vitro including Thr-43 and Thr-45. Acetylated on 8 Lys residues in vivo (probably by Eis). In vitro acetylated by Eis on 28 residues (strains H37Rv and H37Ra), many more than those identified in vivo. Also acetylated by MRA_0812. Deacetylated in vitro by NAD-dependent protein deacylase NPD (MRA_1161). In terms of processing, succinylated in vivo and in vitro by MRA_0812 and by Eis; only 3 residues are found to be succinylated in vivo, while 27 are modifed in vitro by MRA_0812 and 32 are succinylated by Eis. NAD-dependent protein deacylase (MRA_1161) desuccinylates this protein.

The protein localises to the cytoplasm. The protein resides in the nucleoid. The enzyme catalyses 4 Fe(2+) + O2 + 4 H(+) = 4 Fe(3+) + 2 H2O. Its activity is regulated as follows. Two trans-stilbene derivatives, 4,4'-[(E)-ethene-1,2 diylbis({5[(phenylcarbonyl)amino]benzene-2,1-diyl}sulfonylimino)] dibenzoic acid and its methoxy derivative 4,4'-[1,2-ethenediylbis({5-[(4-methoxybenzoyl)amino]-2,1phenylene}sulfonylimino)] dibenzoic acid, respectively SD1 and SD4, inhibit DNA binding with 50% inhibition at 20 uM for SD1 and 1.7 uM for SD4. SD1 and SD4 have minimal inhibitory concentrations of 400 and 800 uM on strain H37Ra respectively. Functionally, a nucleoid-associated protein (NAP) that plays a role in local chromosome architecture. Binds DNA non-sequence specifically; in vitro phosphorylation of an N-terminal fragment decreases DNA-binding. Stimulates supercoiling relaxation by topoisomerase 1 (Top1, topA), at higher than 80 uM inhibits relaxation, has no effect on DNA gyrase; the effect is independent of DNA-binding. Increases the intervening strand passage activity of Top1 that occurs between the two catalytic trans-esterification reactions. Does not bind ssDNA, probably helps condense chromosomes. Binds dsDNA; in vitro acetylated protein binds 10-fold less well to DNA (note in vitro acetylated protein is more heavily modified than in vivo modified protein). In vitro acetylated protein compacts DNA less well than unmodified protein. In vitro succinylated DNA bind dsDNA less well than unmodified protein (note in vitro succinylated protein is more heavily modified than in vivo modified protein). In terms of biological role, has ferroxidase activity, converts Fe(2+) into Fe(3+). Binds Fe(3+) but not Fe(2+); prevents the generation of hydroxyl radicals by the Fenton reaction and thus protects DNA from damage. May function in iron storage. Its function is as follows. Required for biofilm formation; trimethylation by recombinant human SUV39H1 (a histone methyltransferase) inhibits biofilm formation. Probably influences transcription. RNase E and HupB jointly contribute to cellular adaptation to changing growth conditions and survival during antibiotic treatment and in the host. The sequence is that of DNA-binding protein HupB from Mycobacterium tuberculosis (strain ATCC 25177 / H37Ra).